We begin with the raw amino-acid sequence, 316 residues long: MAVSCNHSAILFSPSSTAGSSSVTSSSSLIGFPRFQTLRFKSRSVYSKSRVSSPVSALPLRSLEALIFDCDGVILESENLHRQAYNDAFSHFDVRCPPSSSESLDWSLEFYDKFQNLVGGGKPKMRWYFKENGWPTSTIFDSPPQNDDDRAKLIDTLQDWKTERYKEIIKSGSVEPRPGVIRLMDEAKAAGKKLAVCSAATKSSVILCLENLIDIERFQGLDCFLAGDDVKEKKPDPSIYITAAEKLGVSVKDCLVVEDSVIGLQAATKAGMSCVITYTSSTSDQNFNDAIAVYPDLSNVKLKDLETLLQTIVTAA.

The N-terminal 46 residues, 1–46 (MAVSCNHSAILFSPSSTAGSSSVTSSSSLIGFPRFQTLRFKSRSVY), are a transit peptide targeting the chloroplast. Asp69 serves as the catalytic Nucleophile. Mg(2+) contacts are provided by Asp69, Asp71, and Asp259. Asp71 serves as the catalytic Proton donor.

The protein belongs to the HAD-like hydrolase superfamily. DOG/GPP family. Mg(2+) serves as cofactor.

It localises to the plastid. The protein resides in the chloroplast. This chain is Haloacid dehalogenase-like hydrolase domain-containing protein At4g39970, found in Arabidopsis thaliana (Mouse-ear cress).